Consider the following 569-residue polypeptide: Pyruvate decarboxylase (569 aa).

2 residues coordinate pyruvate: D38 and H124. Thiamine diphosphate is bound by residues T398 and 421–423 (GSI). D451 contacts Mg(2+). Thiamine diphosphate contacts are provided by residues 452–453 (GS) and 478–483 (NQGYTI). Mg(2+)-binding residues include N478 and G480. A pyruvate-binding site is contributed by E484.

It belongs to the TPP enzyme family. As to quaternary structure, homotetramer. Mg(2+) serves as cofactor. It depends on thiamine diphosphate as a cofactor.

It carries out the reaction a 2-oxocarboxylate + H(+) = an aldehyde + CO2. The catalysed reaction is pyruvate + H(+) = acetaldehyde + CO2. This Aspergillus terreus (strain NIH 2624 / FGSC A1156) protein is Pyruvate decarboxylase (pdcA).